Consider the following 404-residue polypeptide: 2,3-diketo-5-methylthiopentyl-1-phosphate enolase (404 aa).

The Proton acceptor role is filled by Lys91. Residues Lys140, 166 to 169 (KDDE), His257, Gly329, and 351 to 352 (GG) each bind substrate. Mg(2+) contacts are provided by Lys166, Asp168, and Glu169. Residue Lys166 is modified to N6-carboxylysine.

Belongs to the RuBisCO large chain family. Type IV subfamily. In terms of assembly, homodimer. It depends on Mg(2+) as a cofactor.

The catalysed reaction is 5-methylsulfanyl-2,3-dioxopentyl phosphate = 2-hydroxy-5-methylsulfanyl-3-oxopent-1-enyl phosphate. The protein operates within amino-acid biosynthesis; L-methionine biosynthesis via salvage pathway; L-methionine from S-methyl-5-thio-alpha-D-ribose 1-phosphate: step 3/6. Functionally, catalyzes the enolization of 2,3-diketo-5-methylthiopentyl-1-phosphate (DK-MTP-1-P) into 2-hydroxy-3-keto-5-methylthiopentenyl-1-phosphate (HK-MTPenyl-1-P). The protein is 2,3-diketo-5-methylthiopentyl-1-phosphate enolase of Bacillus velezensis (strain DSM 23117 / BGSC 10A6 / LMG 26770 / FZB42) (Bacillus amyloliquefaciens subsp. plantarum).